Consider the following 199-residue polypeptide: Nuclear protein UL4 (199 aa).

Belongs to the alphaherpesvirinae HHV-1 UL4 family.

The protein localises to the host nucleus. In Homo sapiens (Human), this protein is Nuclear protein UL4.